The following is a 487-amino-acid chain: ATP-dependent 6-phosphofructokinase (487 aa).

ATP-binding positions include Gly-107, 173 to 174, 198 to 201, and Lys-226; these read RG and GDGT. Asp-199 contributes to the Mg(2+) binding site. Residues 227-229, 272-274, and Glu-325 contribute to the substrate site; these read TID and MGR. Asp-229 functions as the Proton acceptor in the catalytic mechanism. 341 to 343 is a binding site for ATP; sequence SGN. Position 380–383 (380–383) interacts with substrate; the sequence is YMIR. The Peroxisomal targeting signal signature appears at 485–487; sequence AKL.

Belongs to the phosphofructokinase type A (PFKA) family. PPi-dependent PFK group II subfamily. Atypical ATP-dependent clade 'X' sub-subfamily. As to quaternary structure, homotetramer. Requires Mg(2+) as cofactor.

Its subcellular location is the glycosome. It catalyses the reaction beta-D-fructose 6-phosphate + ATP = beta-D-fructose 1,6-bisphosphate + ADP + H(+). The protein operates within carbohydrate degradation; glycolysis; D-glyceraldehyde 3-phosphate and glycerone phosphate from D-glucose: step 3/4. With respect to regulation, allosterically activated by AMP. In terms of biological role, catalyzes the phosphorylation of D-fructose 6-phosphate to fructose 1,6-bisphosphate by ATP, the first committing step of glycolysis. This Trypanosoma brucei brucei protein is ATP-dependent 6-phosphofructokinase.